Here is a 99-residue protein sequence, read N- to C-terminus: Integration host factor subunit alpha (99 aa).

The interval 49–71 (FGNFDLRDKNQRPGRNPKTGEDI) is disordered.

The protein belongs to the bacterial histone-like protein family. As to quaternary structure, heterodimer of an alpha and a beta chain.

Its function is as follows. This protein is one of the two subunits of integration host factor, a specific DNA-binding protein that functions in genetic recombination as well as in transcriptional and translational control. The protein is Integration host factor subunit alpha of Shewanella denitrificans (strain OS217 / ATCC BAA-1090 / DSM 15013).